The sequence spans 225 residues: UPF0758 protein XCV4028 (225 aa).

An MPN domain is found at 102-224 (ALSDPPSVGR…PVSFAERGWL (123 aa)). The Zn(2+) site is built by histidine 173, histidine 175, and aspartate 186. Residues 173-186 (HNHPSGNPEPSEAD) carry the JAMM motif motif.

Belongs to the UPF0758 family.

This Xanthomonas euvesicatoria pv. vesicatoria (strain 85-10) (Xanthomonas campestris pv. vesicatoria) protein is UPF0758 protein XCV4028.